The following is a 335-amino-acid chain: Putative serine/threonine-protein kinase 040L (335 aa).

A Protein kinase domain is found at 33-329 (YYYQEFHDEG…DRLTELHHHL (297 aa)). ATP contacts are provided by residues 39–47 (HDEGGYGSI) and K62. Catalysis depends on D196, which acts as the Proton acceptor.

This sequence belongs to the protein kinase superfamily. Ser/Thr protein kinase family.

The polypeptide is Putative serine/threonine-protein kinase 040L (Invertebrate iridescent virus 3 (IIV-3)).